Consider the following 479-residue polypeptide: Cyclin-dependent kinase F-1 (479 aa).

Positions 21–418 constitute a Protein kinase domain; it reads YEIFERVGSG…TMEMLNDKYL (398 aa). Residues 27 to 35 and Lys50 contribute to the ATP site; that span reads VGSGAYADV. Residue Tyr32 is modified to Phosphotyrosine. Asp146 functions as the Proton acceptor in the catalytic mechanism. Residues Ser179, Ser208, and Ser247 each carry the phosphoserine modification. The interval 187-221 is disordered; sequence KLEDKDGETSEPPEVIPDYENSPRQGSDGQEREAM. Thr290 bears the Phosphothreonine mark. Positions 434-479 are disordered; the sequence is PTMSGPDEDSPRKWNDYREMDSDSDFDGFGPMNVKPTSSGFTIEFP. Residues 442–454 are compositionally biased toward basic and acidic residues; sequence DSPRKWNDYREMD. The span at 468-479 shows a compositional bias: polar residues; the sequence is KPTSSGFTIEFP.

It belongs to the protein kinase superfamily. CMGC Ser/Thr protein kinase family. CDC2/CDKX subfamily. Highly expressed in suspension cell culture. Expressed at low levels in all plant organs.

The catalysed reaction is L-seryl-[protein] + ATP = O-phospho-L-seryl-[protein] + ADP + H(+). It carries out the reaction L-threonyl-[protein] + ATP = O-phospho-L-threonyl-[protein] + ADP + H(+). The enzyme catalyses [DNA-directed RNA polymerase] + ATP = phospho-[DNA-directed RNA polymerase] + ADP + H(+). CDK-activating kinase that modulates CDKD-2 and CDKD-3 activities by phosphorylation of the T-loop. Activates CDKD-2 C-terminal domain (CTD) kinase activity. Activates CDKA-1 probably by phosphorylation. Possesses a CDK kinase activity independently of association with cyclin CYCH1-1. Phosphorylates the CTD of the large subunit of RNA polymerase II. This is Cyclin-dependent kinase F-1 (CDKF-1) from Arabidopsis thaliana (Mouse-ear cress).